The sequence spans 169 residues: MSHPALRQLRALSFFDDISTLDSSLLDWLMLEDSMTRRFEGFCERVTVDMLFEGFVGPEALEEEGEFLPDEPRYWLREILLCGDGVPWLVGRTLVPESTLCGPELALQQLGTTPLGRYLFTSSTLTRDFIQPGRSDELWGRRSLLRLSGKPLLLTELFLPASPLYGEEK.

Residues Met35, Arg77, Leu115, and Glu156 each coordinate substrate.

The protein belongs to the UbiC family. Monomer.

It is found in the cytoplasm. It carries out the reaction chorismate = 4-hydroxybenzoate + pyruvate. It participates in cofactor biosynthesis; ubiquinone biosynthesis. Removes the pyruvyl group from chorismate, with concomitant aromatization of the ring, to provide 4-hydroxybenzoate (4HB) for the ubiquinone pathway. This is Chorismate pyruvate-lyase from Cronobacter sakazakii (strain ATCC BAA-894) (Enterobacter sakazakii).